The following is a 503-amino-acid chain: Nuclear respiratory factor 1 (503 aa).

Positions Met-1–Gly-78 are dimerization. The disordered stretch occupies residues Ser-36–Asp-57. A phosphoserine; by CK2 mark is found at Ser-39, Ser-44, Ser-46, Ser-47, and Ser-52. The Nuclear localization signal motif lies at Gly-88 to Arg-116. The DNA-binding element occupies Thr-109–Thr-305. A Glycyl lysine isopeptide (Lys-Gly) (interchain with G-Cter in SUMO2) cross-link involves residue Lys-139. The interval Val-301–Ala-476 is required for transcriptional activation.

It belongs to the NRF1/Ewg family. Homodimer. Binds DNA as a dimer. Interacts with PPRC1. In terms of processing, phosphorylation enhances DNA binding. In terms of tissue distribution, ubiquitously expressed with strongest expression in skeletal muscle.

It localises to the nucleus. In terms of biological role, transcription factor that activates the expression of the EIF2S1 (EIF2-alpha) gene. Links the transcriptional modulation of key metabolic genes to cellular growth and development. Implicated in the control of nuclear genes required for respiration, heme biosynthesis, and mitochondrial DNA transcription and replication. This chain is Nuclear respiratory factor 1 (NRF1), found in Homo sapiens (Human).